A 606-amino-acid chain; its full sequence is 1-deoxy-D-xylulose-5-phosphate synthase (606 aa).

Residues histidine 63 and 104–106 (GHS) each bind thiamine diphosphate. Residue aspartate 137 coordinates Mg(2+). Thiamine diphosphate is bound by residues 138 to 139 (GS), asparagine 166, tyrosine 273, and glutamate 354. Asparagine 166 provides a ligand contact to Mg(2+).

Belongs to the transketolase family. DXPS subfamily. In terms of assembly, homodimer. It depends on Mg(2+) as a cofactor. The cofactor is thiamine diphosphate.

The catalysed reaction is D-glyceraldehyde 3-phosphate + pyruvate + H(+) = 1-deoxy-D-xylulose 5-phosphate + CO2. It functions in the pathway metabolic intermediate biosynthesis; 1-deoxy-D-xylulose 5-phosphate biosynthesis; 1-deoxy-D-xylulose 5-phosphate from D-glyceraldehyde 3-phosphate and pyruvate: step 1/1. Functionally, catalyzes the acyloin condensation reaction between C atoms 2 and 3 of pyruvate and glyceraldehyde 3-phosphate to yield 1-deoxy-D-xylulose-5-phosphate (DXP). The protein is 1-deoxy-D-xylulose-5-phosphate synthase of Sulfurimonas denitrificans (strain ATCC 33889 / DSM 1251) (Thiomicrospira denitrificans (strain ATCC 33889 / DSM 1251)).